The chain runs to 198 residues: dTTP/UTP pyrophosphatase (198 aa).

Residue D69 is the Proton acceptor of the active site.

It belongs to the Maf family. YhdE subfamily. A divalent metal cation serves as cofactor.

The protein resides in the cytoplasm. It catalyses the reaction dTTP + H2O = dTMP + diphosphate + H(+). It carries out the reaction UTP + H2O = UMP + diphosphate + H(+). Nucleoside triphosphate pyrophosphatase that hydrolyzes dTTP and UTP. May have a dual role in cell division arrest and in preventing the incorporation of modified nucleotides into cellular nucleic acids. This is dTTP/UTP pyrophosphatase from Idiomarina loihiensis (strain ATCC BAA-735 / DSM 15497 / L2-TR).